We begin with the raw amino-acid sequence, 141 residues long: Large ribosomal subunit protein uL11c (141 aa).

This sequence belongs to the universal ribosomal protein uL11 family. Part of the ribosomal stalk of the 50S ribosomal subunit. Interacts with L10 and the large rRNA to form the base of the stalk. L10 forms an elongated spine to which L12 dimers bind in a sequential fashion forming a multimeric L10(L12)X complex.

The protein localises to the plastid. The protein resides in the chloroplast. In terms of biological role, forms part of the ribosomal stalk which helps the ribosome interact with GTP-bound translation factors. This is Large ribosomal subunit protein uL11c from Thalassiosira pseudonana (Marine diatom).